The following is an 840-amino-acid chain: MNQEVKNKIFSILKITFATALFIFVAITLYRELSGINFKDTLVEFSKINRMSLVLLFIGGGASLVILSMYDVILSRALKMDISLGKVLRVSYIINALNAIVGFGGFIGAGVRAMVYKNYTHDKKKLVHFISLILISMLTGLSLLSLLIVFHVFDASLILDKITWVRWVLYVVSFFLPLFIIYSMVRPPDKNNRFVGLYCTLVSCVEWLAAAVVLYFCGVIVDAHVSFMSFIAIFIIAALSGLVSFIPGGFGAFDLVVLLGFKTLGVPEEKVLLMLLLYRFAYYFVPVIIALILSSFEFGTSAKKYIEGSKYFIPAKDVTSFLMSYQKDIIAKIPSLSLAILVFFTSMIFFVNNLTIVYDALYDGNHLTYYILLAIHTSACLLLLLNVVGIYKQSRRAIIFAMISILLITVATFFTYASYILITWLAIIFVLLIVAFRRARRLKRPVRMRNIVAMLLFSLFILYVNHIFIAGTLYALDIYTIEMHTSVLRYYFWLTILIIAIIIGMIAWLFDYQFSKVRISSKIEDCEEIINQYGGNYLSHLIYSGDKQFFTNENKTAFLMYRYKASSLVVLGDPLGDENAFDELLEAFYNYAEYLGYDVIFYQVTDQHMPLYHNFGNQFFKLGEEAIIDLTQFSTSGKKRRGFRATLNKFDELNISFEIIEPPFSTEFINELQHVSDLWLDNRQEMHFSVGEFNEEYLSKAPIGVMRNEENEVIAFCSLMPTYFNDAISVDLIRWLPELDLPLMDGLYLHMLLWSKEQGYTKFNMGMATLSNVGQLHYSYLRERLAGRVFEHFNGLYRFQGLRRYKSKYNPNWEPRFLVYRKDNSLWESLSKVMRVIRHK.

The Cytoplasmic segment spans residues 1–8 (MNQEVKNK). The chain crosses the membrane as a helical span at residues 9 to 29 (IFSILKITFATALFIFVAITL). The Extracellular portion of the chain corresponds to 30-52 (YRELSGINFKDTLVEFSKINRMS). The helical transmembrane segment at 53–73 (LVLLFIGGGASLVILSMYDVI) threads the bilayer. At 74–89 (LSRALKMDISLGKVLR) the chain is on the cytoplasmic side. A helical transmembrane segment spans residues 90–110 (VSYIINALNAIVGFGGFIGAG). Residues 111–128 (VRAMVYKNYTHDKKKLVH) are Extracellular-facing. The helical transmembrane segment at 129–149 (FISLILISMLTGLSLLSLLIV) threads the bilayer. Topologically, residues 150–161 (FHVFDASLILDK) are cytoplasmic. The helical transmembrane segment at 162 to 182 (ITWVRWVLYVVSFFLPLFIIY) threads the bilayer. The Extracellular segment spans residues 183–200 (SMVRPPDKNNRFVGLYCT). A helical transmembrane segment spans residues 201 to 221 (LVSCVEWLAAAVVLYFCGVIV). Residues 222–229 (DAHVSFMS) lie on the Cytoplasmic side of the membrane. Residues 230 to 250 (FIAIFIIAALSGLVSFIPGGF) traverse the membrane as a helical segment. The Extracellular segment spans residues 251-271 (GAFDLVVLLGFKTLGVPEEKV). A helical membrane pass occupies residues 272–292 (LLMLLLYRFAYYFVPVIIALI). At 293-337 (LSSFEFGTSAKKYIEGSKYFIPAKDVTSFLMSYQKDIIAKIPSLS) the chain is on the cytoplasmic side. The chain crosses the membrane as a helical span at residues 338–358 (LAILVFFTSMIFFVNNLTIVY). Over 359-369 (DALYDGNHLTY) the chain is Extracellular. The helical transmembrane segment at 370 to 390 (YILLAIHTSACLLLLLNVVGI) threads the bilayer. Residues 391 to 394 (YKQS) are Cytoplasmic-facing. Transmembrane regions (helical) follow at residues 395–415 (RRAI…TFFT) and 416–436 (YASY…IVAF). Over 437–450 (RRARRLKRPVRMRN) the chain is Cytoplasmic. A helical membrane pass occupies residues 451–471 (IVAMLLFSLFILYVNHIFIAG). Residues 472–489 (TLYALDIYTIEMHTSVLR) lie on the Extracellular side of the membrane. A helical transmembrane segment spans residues 490–510 (YYFWLTILIIAIIIGMIAWLF). Over 511-840 (DYQFSKVRIS…SKVMRVIRHK (330 aa)) the chain is Cytoplasmic.

It belongs to the LPG synthase family.

Its subcellular location is the cell membrane. It carries out the reaction L-lysyl-tRNA(Lys) + a 1,2-diacyl-sn-glycero-3-phospho-(1'-sn-glycerol) = a 1,2-diacyl-sn-glycero-3-phospho-1'-(3'-O-L-lysyl)-sn-glycerol + tRNA(Lys). Functionally, catalyzes the transfer of a lysyl group from L-lysyl-tRNA(Lys) to membrane-bound phosphatidylglycerol (PG), which produces lysylphosphatidylglycerol (LPG), a major component of the bacterial membrane with a positive net charge. LPG synthesis contributes to bacterial virulence as it is involved in the resistance mechanism against cationic antimicrobial peptides (CAMP) produces by the host's immune system (defensins, cathelicidins) and by the competing microorganisms (bacteriocins). In fact, the modification of anionic phosphatidylglycerol with positively charged L-lysine results in repulsion of the peptides. The protein is Phosphatidylglycerol lysyltransferase (mprF) of Staphylococcus aureus (strain COL).